The sequence spans 229 residues: Coiled-coil domain-containing protein 134 (229 aa).

A signal peptide spans 1–22 (MDLLQFLAFLFVLLLSGMGATG). Residue Asn-148 is a short sequence motif, prevents secretion from ER. Asn-148 carries an N-linked (GlcNAc...) asparagine glycan. A disordered region spans residues 193-229 (TDPFQKALREEEKRRKKEEKRKEIRKGPRISRSQSEL). Residues 196 to 218 (FQKALREEEKRRKKEEKRKEIRK) adopt a coiled-coil conformation. The short motif at 206–213 (RRKKEEKR) is the Nuclear localization signal element.

The protein belongs to the CCDC134 family. As to quaternary structure, interacts with TADA2A. Associates with the PCAF complex via TADA2A binding. Post-translationally, O-glycosylated, with additional sialic acid modifications. As to expression, expressed in cervical gland, cervical squamous epithelium, endometrium, stomach, kidney distal convoluted tubule, spermatogenic cells in testis, mammary gland, liver and striated muscle (at protein level). Also detected in placenta. Highest expression in testis relative to other tissues. Detected in T cells and dendritic cells; highly expressed in activated CD8(+) T cells, and also expressed at lower levels in CD4(+) T cells.

It localises to the endoplasmic reticulum lumen. It is found in the secreted. The protein localises to the cytoplasm. Its subcellular location is the nucleus. Molecular adapter required to prevent protein hyperglycosylation of HSP90B1: during translation, associates with nascent HSP90B1 and the STT3A catalytic component of the OST-A complex and tethers them to a specialized translocon that forms a microenvironment for HSP90B1 folding. In the CCDC134-containing translocon, STT3A associates with the SRT pseudosubstrate motif of HSP90B1, preventing access to facultative glycosylation sites until folding is completed, preventing hyperglycosylation and subsequent degradation of HSP90B1. In extracellular secreted form, promotes proliferation and activation of CD8(+) T-cells, suggesting a cytokine-like function. May inhibit ERK and JNK signaling activity. May suppress cell migration and invasion activity, via its effects on ERK and JNK signaling. May also localize in the nucleus: enhances stability of the PCAF histone acetyltransferase (HAT) complex member TADA2A and thus promotes PCAF-mediated histone acetyltransferase activity. Has a critical role in the regulation of osteogenesis and bone development. The sequence is that of Coiled-coil domain-containing protein 134 from Homo sapiens (Human).